The following is a 1137-amino-acid chain: MKCVFVTVGTTSFDDLIACVSAPDSLQKIESLGYNRLILQIGRGTVVPEPFSTESFTLDVYRYKDSLKEDIQKADLVISHAGAGSCLETLEKGKPLVVVINEKLMNNHQLELAKQLHKEGHLFYCTCRVLTCPGQAKSIASAPGKCQDSAALTSTAFSGLDFGLLSGYLHKQALVTATHPTCTLLFPSCHAFFPLPLTPTLYKMHKGWKNYCSQKSLNEASMDEYLGSLGLFRKLTAKDASCLFRAISEQLFCSQVHHLEIRKACVSYMRENQQTFESYVEGSFEKYLERLGDPKESAGQLEIRALSLIYNRDFILYRFPGKPPTYVTDNGYEDKILLCYSSSGHYDSVYSKQFQSSAAVCQAVLYEILYKDVFVVDEEELKTAIKLFRSGSKKNRNNAVTGSEDAHTDYKSSNQNRMEEWGACYNAENIPEGYNKGTEETKSPENPSKMPFPYKVLKALDPEIYRNVEFDVWLDSRKELQKSDYMEYAGRQYYLGDKCQVCLESEGRYYNAHIQEVGNENNSVTVFIEELAEKHVVPLANLKPVTQVMSVPAWNAMPSRKGRGYQKMPGGYVPEIVISEMDIKQQKKMFKKIRGKEVYMTMAYGKGDPLLPPRLQHSMHYGHDPPMHYSQTAGNVMSNEHFHPQHPSPRQGRGYGMPRNSSRFINRHNMPGPKVDFYPGPGKRCCQSYDNFSYRSRSFRRSHRQMSCVNKESQYGFTPGNGQMPRGLEETITFYEVEEGDETAYPTLPNHGGPSTMVPATSGYCVGRRGHSSGKQTLNLEEGNGQSENGRYHEEYLYRAEPDYETSGVYSTTASTANLSLQDRKSCSMSPQDTVTSYNYPQKMMGNIAAVAASCANNVPAPVLSNGAAANQAISTTSVSSQNAIQPLFVSPPTHGRPVIASPSYPCHSAIPHAGASLPPPPPPPPPPPPPPPPPPPPPPPPPPPALDVGETSNLQPPPPLPPPPYSCDPSGSDLPQDTKVLQYYFNLGLQCYYHSYWHSMVYVPQMQQQLHVENYPVYTEPPLVDQTVPQCYSEVRREDGIQAEASANDTFPNADSSSVPHGAVYYPVMSDPYGQPPLPGFDSCLPVVPDYSCVPPWHPVGTAYGGSSQIHGAINPGPIGCIAPSPPASHYVPQGM.

The interval 1-125 is glycosyltransferase activity; sequence MKCVFVTVGT…LHKEGHLFYC (125 aa). A deubiquitinase activity region spans residues 126–400; it reads TCRVLTCPGQ…GSKKNRNNAV (275 aa). The region spanning 231–352 is the OTU domain; the sequence is LFRKLTAKDA…SGHYDSVYSK (122 aa). D239 (for deubiquitinase activity) is an active-site residue. C242 serves as the catalytic Nucleophile; for deubiquitinase activity. H345 (for deubiquitinase activity) is an active-site residue. A Tudor domain is found at 492 to 552; it reads QYYLGDKCQV…KPVTQVMSVP (61 aa). Disordered regions lie at residues 641-660 and 911-974; these read HFHP…MPRN and IPHA…SGSD. 2 stretches are compositionally biased toward pro residues: residues 918–946 and 956–967; these read LPPP…PPPA and QPPPPLPPPPYS.

It belongs to the glycosyltransferase 28 family. As to quaternary structure, forms with ALG14 the active heterodimeric UDP-N-acetylglucosamine transferase complex. In terms of assembly, not able to interact with ALG14 to form an active UDP-N-acetylglucosamine transferase complex.

It localises to the endoplasmic reticulum membrane. The catalysed reaction is an N-acetyl-alpha-D-glucosaminyl-diphospho-di-trans,poly-cis-dolichol + UDP-N-acetyl-alpha-D-glucosamine = an N,N'-diacetylchitobiosyl-diphospho-di-trans,poly-cis-dolichol + UDP + H(+). It participates in protein modification; protein glycosylation. Functionally, catalytic subunit of the UDP-N-acetylglucosamine transferase complex that operates in the biosynthetic pathway of dolichol-linked oligosaccharides, the glycan precursors employed in protein asparagine (N)-glycosylation. The assembly of dolichol-linked oligosaccharides begins on the cytosolic side of the endoplasmic reticulum membrane and finishes in its lumen. The sequential addition of sugars to dolichol pyrophosphate produces dolichol-linked oligosaccharides containing fourteen sugars, including two GlcNAcs, nine mannoses and three glucoses. Once assembled, the oligosaccharide is transferred from the lipid to nascent proteins by oligosaccharyltransferases. On the cytoplasmic face of the endoplasmic reticulum, the dimeric ALG13/ALG14 complex catalyzes the second step of dolichol pyrophosphate biosynthesis, transferring a beta1,4-linked N-acetylglucosamine (GlcNAc) from UDP-GlcNAc to GlcNAc-pyrophosphatedolichol (Gn-PDol) to produce N,N'-diacetylchitobiosyl diphosphodolichol. N,N'-diacetylchitobiosyl diphosphodolichol is a substrate for ALG1, the following enzyme in the biosynthetic pathway. Its function is as follows. No glycosyltransferase or deubiquitinase activity is detected for this potential multifunctional enzyme. The sequence is that of UDP-N-acetylglucosamine transferase subunit ALG13 from Homo sapiens (Human).